Consider the following 452-residue polypeptide: F-box only protein 47 (452 aa).

Residues 41-91 (FGNFKALPLEIFQIILKYLSVKDISMLSMVSKTVSQHIINYISTSSGSKRL) enclose the F-box domain.

Part of a SCF (SKP1-cullin-F-box) protein ligase complex. As to expression, widely expressed, with highest levels in kidney, liver and pancreas. Down-regulated in tumors.

Probably recognizes and binds to some phosphorylated proteins and promotes their ubiquitination and degradation. The polypeptide is F-box only protein 47 (Homo sapiens (Human)).